A 61-amino-acid polypeptide reads, in one-letter code: Large ribosomal subunit protein uL30 (61 aa).

The protein belongs to the universal ribosomal protein uL30 family. In terms of assembly, part of the 50S ribosomal subunit.

This chain is Large ribosomal subunit protein uL30, found in Marinomonas sp. (strain MWYL1).